The sequence spans 159 residues: Peptide methionine sulfoxide reductase MsrB (159 aa).

Residues 22-144 enclose the MsrB domain; the sequence is RERLEANLTA…NSVSLQFVKA (123 aa). Positions 61, 64, 110, and 113 each coordinate Zn(2+). Residue cysteine 133 is the Nucleophile of the active site.

This sequence belongs to the MsrB Met sulfoxide reductase family. Requires Zn(2+) as cofactor.

It carries out the reaction L-methionyl-[protein] + [thioredoxin]-disulfide + H2O = L-methionyl-(R)-S-oxide-[protein] + [thioredoxin]-dithiol. The chain is Peptide methionine sulfoxide reductase MsrB from Caulobacter vibrioides (strain ATCC 19089 / CIP 103742 / CB 15) (Caulobacter crescentus).